The primary structure comprises 308 residues: Taste receptor type 2 member 41 (308 aa).

Topologically, residues 1–7 are extracellular; the sequence is MLPTLSV. The helical transmembrane segment at 8–28 threads the bilayer; sequence FFMLTFVLLCFLGILANGFIV. The Cytoplasmic portion of the chain corresponds to 29–60; sequence LMLSREWLLRGRLLPSDMILFSLGTSRFFQQC. A helical transmembrane segment spans residues 61–81; the sequence is VGLVNSFYYFLHLVEYSGSLA. The Extracellular portion of the chain corresponds to 82–88; it reads RQLISLH. The chain crosses the membrane as a helical span at residues 89–109; that stretch reads WDFLNSATFWFCTWLSVLFCI. Residues 110–128 lie on the Cytoplasmic side of the membrane; sequence KIANFSHPAFLWLKWRFPA. Residues 129-149 form a helical membrane-spanning segment; it reads LVPWFLLGSILVSVIVTLLFF. Residues 150 to 186 lie on the Extracellular side of the membrane; the sequence is WGNHTIYQAFLRRKFTGNTTFKEWNRRLEIDYFMPLK. Asparagine 152 and asparagine 167 each carry an N-linked (GlcNAc...) asparagine glycan. The chain crosses the membrane as a helical span at residues 187–207; sequence VVTMSIPCSLFLVSILLLISS. Over 208–239 the chain is Cytoplasmic; sequence LRRHSLRMQHNTHSLQDPNVQAHSRALKSLIS. A helical membrane pass occupies residues 240 to 260; that stretch reads FLVLYAVSFVSMIIDATVFIS. Over 261-264 the chain is Extracellular; that stretch reads SDNV. Residues 265 to 285 traverse the membrane as a helical segment; sequence WYWPWQIILYFCMSVHPFILI. At 286–308 the chain is on the cytoplasmic side; that stretch reads TNNLRFRGTFRQLLLLARGFWVA.

This sequence belongs to the G-protein coupled receptor T2R family. As to expression, expressed in subsets of taste receptor cells of the tongue and palate epithelium and exclusively in gustducin-positive cells.

The protein localises to the membrane. Receptor that may play a role in the perception of bitterness and is gustducin-linked. May play a role in sensing the chemical composition of the gastrointestinal content. The activity of this receptor may stimulate alpha gustducin, mediate PLC-beta-2 activation and lead to the gating of TRPM5. In Mus musculus (Mouse), this protein is Taste receptor type 2 member 41 (Tas2r41).